The sequence spans 160 residues: Cytochrome c-type biogenesis protein CcmE (160 aa).

Over 1 to 8 the chain is Cytoplasmic; the sequence is MNPRRKQR. Residues 9-29 traverse the membrane as a helical; Signal-anchor for type II membrane protein segment; the sequence is LTWVAILVIGVSVATGLMLYA. Residues 30-160 lie on the Periplasmic side of the membrane; it reads LSQSIDLFYT…PNTVEKGEGQ (131 aa). Residues histidine 130 and tyrosine 134 each contribute to the heme site.

The protein belongs to the CcmE/CycJ family.

Its subcellular location is the cell inner membrane. Functionally, heme chaperone required for the biogenesis of c-type cytochromes. Transiently binds heme delivered by CcmC and transfers the heme to apo-cytochromes in a process facilitated by CcmF and CcmH. The sequence is that of Cytochrome c-type biogenesis protein CcmE from Idiomarina loihiensis (strain ATCC BAA-735 / DSM 15497 / L2-TR).